The following is a 341-amino-acid chain: Large ribosomal subunit protein uL3 (341 aa).

2 disordered regions span residues 1–31 (MGHR…SPRS) and 234–261 (HRKG…GQMG).

The protein belongs to the universal ribosomal protein uL3 family. In terms of assembly, part of the 50S ribosomal subunit. Forms a cluster with proteins L14 and L24e.

In terms of biological role, one of the primary rRNA binding proteins, it binds directly near the 3'-end of the 23S rRNA, where it nucleates assembly of the 50S subunit. This is Large ribosomal subunit protein uL3 from Metallosphaera sedula (strain ATCC 51363 / DSM 5348 / JCM 9185 / NBRC 15509 / TH2).